The primary structure comprises 637 residues: ATP-dependent RNA helicase DBP6 (637 aa).

The segment at 1–93 (MFAVRFDPSQ…AASDHPDKHN (93 aa)) is disordered. Residues 33–84 (DEEDESSEEETESSEDEEEKEKEEVADEDSMDVDDESSGDDDEEAEEGEVDA) are compositionally biased toward acidic residues. Positions 198–206 (TFPIQSILL) match the Q motif motif. The Helicase ATP-binding domain occupies 222–402 (KNFTRRVGDV…GLQFYNPKLF (181 aa)). 235-242 (ASTGSGKT) lines the ATP pocket. The DEAD box signature appears at 342–345 (DEAD). The Helicase C-terminal domain maps to 434-608 (FLLRLLSEIN…EGQEEEAQVL (175 aa)).

This sequence belongs to the DEAD box helicase family. DDX51/DBP6 subfamily. Associated with pre-ribosomal particles.

It localises to the nucleus. Its subcellular location is the nucleolus. The catalysed reaction is ATP + H2O = ADP + phosphate + H(+). ATP-binding RNA helicase involved in the biogenesis of 60S ribosomal subunits and is required for the normal formation of 25S and 5.8S rRNAs. In Vanderwaltozyma polyspora (strain ATCC 22028 / DSM 70294 / BCRC 21397 / CBS 2163 / NBRC 10782 / NRRL Y-8283 / UCD 57-17) (Kluyveromyces polysporus), this protein is ATP-dependent RNA helicase DBP6 (DBP6).